We begin with the raw amino-acid sequence, 56 residues long: Potassium channel toxin alpha-KTx 9.1 (56 aa).

The signal sequence occupies residues 1 to 28 (MSRLFTLVLIVLAMNVMMAIISDPVVEA). Disulfide bonds link Cys-31–Cys-47, Cys-34–Cys-52, and Cys-38–Cys-54.

Expressed by the venom gland.

It localises to the secreted. Its function is as follows. Blocks small conductance calcium-activated potassium channels (KCNN, SK). Weakly inhibits the Kv7.1/KCNQ1 channel (10 uM of the toxin inhibits currents by 23.3%). Low toxicity by intracerebroventricular injection into mice. The sequence is that of Potassium channel toxin alpha-KTx 9.1 from Olivierus martensii (Manchurian scorpion).